Reading from the N-terminus, the 31-residue chain is Chassatide C5 (31 aa).

A cross-link (cyclopeptide (Gly-Asn)) is located at residues 1–31; sequence GVIPCGESCVFIPCISSVVGCSCKNKVCYRN. 3 disulfide bridges follow: cysteine 5–cysteine 21, cysteine 9–cysteine 23, and cysteine 14–cysteine 28.

In terms of processing, this is a cyclic peptide. As to expression, expressed in pedicel, root and stem but not in leaf and fruit (at protein level).

Functionally, probably participates in a plant defense mechanism. This is Chassatide C5 from Chassalia chartacea (Chassalia curviflora).